A 99-amino-acid polypeptide reads, in one-letter code: Large ribosomal subunit protein bL21 (99 aa).

This sequence belongs to the bacterial ribosomal protein bL21 family. Part of the 50S ribosomal subunit. Contacts protein L20.

In terms of biological role, this protein binds to 23S rRNA in the presence of protein L20. The sequence is that of Large ribosomal subunit protein bL21 from Mesomycoplasma hyopneumoniae (strain 7448) (Mycoplasma hyopneumoniae).